The primary structure comprises 470 residues: GTPase Der (470 aa).

2 consecutive EngA-type G domains span residues 32-195 (PVVA…PTIS) and 206-379 (RRVA…KSWD). GTP-binding positions include 38–45 (GRPNVGKS), 85–89 (DTGGW), 147–150 (NKVD), 212–219 (GKPNVGKS), 259–263 (DTAGL), and 324–327 (NKWD). Positions 380–462 (TRVSTGRLNT…PIRINVRVRE (83 aa)) constitute a KH-like domain.

The protein belongs to the TRAFAC class TrmE-Era-EngA-EngB-Septin-like GTPase superfamily. EngA (Der) GTPase family. In terms of assembly, associates with the 50S ribosomal subunit.

Its function is as follows. GTPase that plays an essential role in the late steps of ribosome biogenesis. This is GTPase Der from Mycolicibacterium vanbaalenii (strain DSM 7251 / JCM 13017 / BCRC 16820 / KCTC 9966 / NRRL B-24157 / PYR-1) (Mycobacterium vanbaalenii).